We begin with the raw amino-acid sequence, 380 residues long: Cytochrome b (380 aa).

The next 4 helical transmembrane spans lie at phenylalanine 34 to methionine 54, tryptophan 78 to isoleucine 99, tryptophan 114 to leucine 134, and phenylalanine 179 to threonine 199. The heme b site is built by histidine 84 and histidine 98. Heme b-binding residues include histidine 183 and histidine 197. Residue histidine 202 participates in a ubiquinone binding. A run of 4 helical transmembrane segments spans residues leucine 227–serine 247, leucine 289–histidine 309, leucine 321–serine 341, and phenylalanine 348–proline 368.

Belongs to the cytochrome b family. As to quaternary structure, the cytochrome bc1 complex contains 11 subunits: 3 respiratory subunits (MT-CYB, CYC1 and UQCRFS1), 2 core proteins (UQCRC1 and UQCRC2) and 6 low-molecular weight proteins (UQCRH/QCR6, UQCRB/QCR7, UQCRQ/QCR8, UQCR10/QCR9, UQCR11/QCR10 and a cleavage product of UQCRFS1). This cytochrome bc1 complex then forms a dimer. Heme b serves as cofactor.

The protein localises to the mitochondrion inner membrane. In terms of biological role, component of the ubiquinol-cytochrome c reductase complex (complex III or cytochrome b-c1 complex) that is part of the mitochondrial respiratory chain. The b-c1 complex mediates electron transfer from ubiquinol to cytochrome c. Contributes to the generation of a proton gradient across the mitochondrial membrane that is then used for ATP synthesis. This Fregetta tropica (Black-bellied storm-petrel) protein is Cytochrome b (MT-CYB).